Here is a 362-residue protein sequence, read N- to C-terminus: tRNA 2-selenouridine synthase (362 aa).

The Rhodanese domain maps to 14 to 137; the sequence is LANETPIIDV…LRQATIEMTN (124 aa). Cys97 functions as the S-selanylcysteine intermediate in the catalytic mechanism.

This sequence belongs to the SelU family. In terms of assembly, monomer.

The catalysed reaction is 5-methylaminomethyl-2-thiouridine(34) in tRNA + selenophosphate + (2E)-geranyl diphosphate + H2O + H(+) = 5-methylaminomethyl-2-selenouridine(34) in tRNA + (2E)-thiogeraniol + phosphate + diphosphate. It catalyses the reaction 5-methylaminomethyl-2-thiouridine(34) in tRNA + (2E)-geranyl diphosphate = 5-methylaminomethyl-S-(2E)-geranyl-thiouridine(34) in tRNA + diphosphate. The enzyme catalyses 5-methylaminomethyl-S-(2E)-geranyl-thiouridine(34) in tRNA + selenophosphate + H(+) = 5-methylaminomethyl-2-(Se-phospho)selenouridine(34) in tRNA + (2E)-thiogeraniol. It carries out the reaction 5-methylaminomethyl-2-(Se-phospho)selenouridine(34) in tRNA + H2O = 5-methylaminomethyl-2-selenouridine(34) in tRNA + phosphate. In terms of biological role, involved in the post-transcriptional modification of the uridine at the wobble position (U34) of tRNA(Lys), tRNA(Glu) and tRNA(Gln). Catalyzes the conversion of 2-thiouridine (S2U-RNA) to 2-selenouridine (Se2U-RNA). Acts in a two-step process involving geranylation of 2-thiouridine (S2U) to S-geranyl-2-thiouridine (geS2U) and subsequent selenation of the latter derivative to 2-selenouridine (Se2U) in the tRNA chain. The protein is tRNA 2-selenouridine synthase of Proteus mirabilis (strain HI4320).